The sequence spans 203 residues: Somatotropin (203 aa).

An N-terminal signal peptide occupies residues 1–17 (MDRVVIVLSVLSVAASS). Residue Gln18 is modified to Pyrrolidone carboxylic acid. His35 contributes to the Zn(2+) binding site. A disulfide bridge connects residues Cys68 and Cys176. Zn(2+) is bound at residue Glu185. A disulfide bridge links Cys193 with Cys201.

This sequence belongs to the somatotropin/prolactin family.

The protein localises to the secreted. Growth hormone plays an important role in growth control and is involved in the regulation of several anabolic processes. Implicated as an osmoregulatory substance important for seawater adaptation. This Solea senegalensis (Senegalese sole) protein is Somatotropin (gh).